The primary structure comprises 187 residues: Protein GrpE (187 aa).

Residues 1-26 form a disordered region; the sequence is MHDPKESLETNIQETESQEKLPETPI.

This sequence belongs to the GrpE family. As to quaternary structure, homodimer.

The protein resides in the cytoplasm. Its function is as follows. Participates actively in the response to hyperosmotic and heat shock by preventing the aggregation of stress-denatured proteins, in association with DnaK and GrpE. It is the nucleotide exchange factor for DnaK and may function as a thermosensor. Unfolded proteins bind initially to DnaJ; upon interaction with the DnaJ-bound protein, DnaK hydrolyzes its bound ATP, resulting in the formation of a stable complex. GrpE releases ADP from DnaK; ATP binding to DnaK triggers the release of the substrate protein, thus completing the reaction cycle. Several rounds of ATP-dependent interactions between DnaJ, DnaK and GrpE are required for fully efficient folding. The sequence is that of Protein GrpE from Dichelobacter nodosus (strain VCS1703A).